A 187-amino-acid polypeptide reads, in one-letter code: Corticoliberin (187 aa).

A signal peptide spans 1–19; that stretch reads MRLRLLVSAGMLLVALSSC. A propeptide spanning residues 20–144 is cleaved from the precursor; it reads LPCRALLSRG…HQGALERERR (125 aa). 2 disordered regions span residues 75 to 94 and 114 to 146; these read AARL…SRPS and QRSL…RRSE. Positions 117–129 are enriched in basic and acidic residues; that stretch reads LDSRAEPAERGAE. Ile-185 is modified (isoleucine amide).

Belongs to the sauvagine/corticotropin-releasing factor/urotensin I family. Interacts (via C-terminus) with CRFR1 (via N-terminal extracellular domain). Expressed in parvocellular paraventricular nucleus of the hypothalamus and in medial accessory olivary nucleus.

It localises to the secreted. In terms of biological role, hormone regulating the release of corticotropin from pituitary gland. Induces NLRP6 in intestinal epithelial cells, hence may influence gut microbiota profile. This is Corticoliberin (Crh) from Mus musculus (Mouse).